We begin with the raw amino-acid sequence, 351 residues long: MAHTEILDTLQQGSKLSKPEMKRCMDAIMDGAIPDTAIATILTLLQKNGISADEIAGARESLIERATPITLDERAVDTCGTGGDSAGTFNISTAAALIANAAGVSIAKHGNRSVTSQCGSADVLEALGLPIELHPEATTALYRQTGFAFLYAPLYHPAMKKVAPVRKSLGIRTIFNILGPLLNPARVKRQLVGVFEPSLMELYAEALRQSGCSHALIVHGETESGLPLDEASVSGRTHIIELQNNVTCRHTTKPTDFHLQQWPIADLAGGTREENALLITRLLEGKATQAQREAALFAAAIACYVSGNANCIDEGICMAKEALAERRALRNLEAIIEISRDLERKYGTGKN.

5-phospho-alpha-D-ribose 1-diphosphate contacts are provided by residues Gly-80, 83-84, Thr-88, 90-93, 108-116, and Ser-120; these read GD, NIST, and KHGNRSVTS. Gly-80 contacts anthranilate. Residue Ser-92 coordinates Mg(2+). Asn-111 is a binding site for anthranilate. An anthranilate-binding site is contributed by Arg-166. Mg(2+)-binding residues include Asp-229 and Glu-230.

Belongs to the anthranilate phosphoribosyltransferase family. As to quaternary structure, homodimer. The cofactor is Mg(2+).

It catalyses the reaction N-(5-phospho-beta-D-ribosyl)anthranilate + diphosphate = 5-phospho-alpha-D-ribose 1-diphosphate + anthranilate. It participates in amino-acid biosynthesis; L-tryptophan biosynthesis; L-tryptophan from chorismate: step 2/5. Functionally, catalyzes the transfer of the phosphoribosyl group of 5-phosphorylribose-1-pyrophosphate (PRPP) to anthranilate to yield N-(5'-phosphoribosyl)-anthranilate (PRA). This Chlorobium phaeovibrioides (strain DSM 265 / 1930) (Prosthecochloris vibrioformis (strain DSM 265)) protein is Anthranilate phosphoribosyltransferase.